Here is a 79-residue protein sequence, read N- to C-terminus: MNRTNKLILGAVVLGSALLAGCSSNAKIDQLSSDVQTLSAKVDQLSNDVNAMRSDVQAAKDDAARANQRLDNKVLRICK.

A signal peptide spans 1-21 (MNRTNKLILGAVVLGSALLAG). Cysteine 22 carries the N-palmitoyl cysteine lipid modification. Cysteine 22 is lipidated: S-diacylglycerol cysteine. 2 consecutive repeats follow at residues 25–35 (NAKIDQLSSDV) and 39–49 (SAKVDQLSNDV). Positions 28–76 (IDQLSSDVQTLSAKVDQLSNDVNAMRSDVQAAKDDAARANQRLDNKVLR) form a coiled coil. At lysine 79 the chain carries N6-murein peptidoglycan lysine.

It belongs to the Lpp family. In terms of assembly, homotrimer.

It is found in the cell outer membrane. The protein resides in the secreted. The protein localises to the cell wall. Functionally, a highly abundant outer membrane lipoprotein that controls the distance between the inner and outer membranes. The only protein known to be covalently linked to the peptidoglycan network (PGN). Also non-covalently binds the PGN. The link between the cell outer membrane and PGN contributes to maintenance of the structural and functional integrity of the cell envelope, and maintains the correct distance between the PGN and the outer membrane. The protein is Major outer membrane lipoprotein Lpp 3 of Salmonella paratyphi A (strain ATCC 9150 / SARB42).